The following is a 242-amino-acid chain: Pyridoxine 5'-phosphate synthase (242 aa).

Residue Asn6 coordinates 3-amino-2-oxopropyl phosphate. 8–9 (DH) contacts 1-deoxy-D-xylulose 5-phosphate. Arg17 contacts 3-amino-2-oxopropyl phosphate. His42 serves as the catalytic Proton acceptor. 1-deoxy-D-xylulose 5-phosphate is bound by residues Arg44 and His49. Glu69 serves as the catalytic Proton acceptor. Thr99 provides a ligand contact to 1-deoxy-D-xylulose 5-phosphate. The active-site Proton donor is His190. 3-amino-2-oxopropyl phosphate is bound by residues Gly191 and 212–213 (GH).

Belongs to the PNP synthase family. In terms of assembly, homooctamer; tetramer of dimers.

Its subcellular location is the cytoplasm. It catalyses the reaction 3-amino-2-oxopropyl phosphate + 1-deoxy-D-xylulose 5-phosphate = pyridoxine 5'-phosphate + phosphate + 2 H2O + H(+). It participates in cofactor biosynthesis; pyridoxine 5'-phosphate biosynthesis; pyridoxine 5'-phosphate from D-erythrose 4-phosphate: step 5/5. In terms of biological role, catalyzes the complicated ring closure reaction between the two acyclic compounds 1-deoxy-D-xylulose-5-phosphate (DXP) and 3-amino-2-oxopropyl phosphate (1-amino-acetone-3-phosphate or AAP) to form pyridoxine 5'-phosphate (PNP) and inorganic phosphate. This chain is Pyridoxine 5'-phosphate synthase, found in Neisseria meningitidis serogroup C.